We begin with the raw amino-acid sequence, 196 residues long: Molybdopterin synthase catalytic subunit (196 aa).

Residues 1–29 (MSTLPSTDPPPLPASTSSQQPAVHIPPPS) are disordered. Residues 145 to 146 (HR), lysine 161, and 168 to 170 (KRE) each bind substrate. Positions 174-196 (GEPPGQGEWRANRDTDPEGKSTS) are disordered. Over residues 183-196 (RANRDTDPEGKSTS) the composition is skewed to basic and acidic residues.

It belongs to the MoaE family. MOCS2B subfamily. In terms of assembly, heterotetramer; composed of 2 small (MOCS2A) and 2 large (MOCS2B) subunits.

It localises to the cytoplasm. The enzyme catalyses 2 [molybdopterin-synthase sulfur-carrier protein]-C-terminal-Gly-aminoethanethioate + cyclic pyranopterin phosphate + H2O = molybdopterin + 2 [molybdopterin-synthase sulfur-carrier protein]-C-terminal Gly-Gly + 2 H(+). It participates in cofactor biosynthesis; molybdopterin biosynthesis. In terms of biological role, catalytic subunit of the molybdopterin synthase complex, a complex that catalyzes the conversion of precursor Z into molybdopterin. Acts by mediating the incorporation of 2 sulfur atoms from thiocarboxylated MOCS2A into precursor Z to generate a dithiolene group. This Coccidioides immitis (strain RS) (Valley fever fungus) protein is Molybdopterin synthase catalytic subunit.